The chain runs to 188 residues: Accessory gene regulator protein B (188 aa).

The next 4 membrane-spanning stretches (helical) occupy residues 49–69 (LALL…FLTL), 104–126 (ISFQ…YAPA), 143–163 (IKSI…PPPY), and 166–186 (FVVY…SIKE).

It belongs to the AgrB family.

The protein resides in the cell membrane. Essential for the production of a quorum sensing system signal molecule, the autoinducing peptide (AIP). This quorum sensing system is responsible for the regulation of the expression of virulence factor genes. Involved in the proteolytic processing of AgrD, the precursor of AIP. In Staphylococcus intermedius, this protein is Accessory gene regulator protein B.